Reading from the N-terminus, the 180-residue chain is MTEPIVVGRIGRPHGVRGDVTIEVRTDLPQRRFALGAVLGREGGGAPLTVAEARWHSGRLLLRFQGVEDRGAAEALRDVLLTIDSAEAGPPVDDDEDAEGEGGDIWWDRDLVGLEAVTTAGATLGRVTDVIHAPAGDLLAVGRPGGGEHLVPFVREIVPTVDPAAGRIVVDPPPGLLDLD.

The PRC barrel domain maps to 103-176 (GDIWWDRDLV…RIVVDPPPGL (74 aa)).

This sequence belongs to the RimM family. Binds ribosomal protein uS19.

It localises to the cytoplasm. Its function is as follows. An accessory protein needed during the final step in the assembly of 30S ribosomal subunit, possibly for assembly of the head region. Essential for efficient processing of 16S rRNA. May be needed both before and after RbfA during the maturation of 16S rRNA. It has affinity for free ribosomal 30S subunits but not for 70S ribosomes. In Frankia alni (strain DSM 45986 / CECT 9034 / ACN14a), this protein is Ribosome maturation factor RimM.